The chain runs to 88 residues: Small ribosomal subunit protein uS17 (88 aa).

It belongs to the universal ribosomal protein uS17 family. Part of the 30S ribosomal subunit.

In terms of biological role, one of the primary rRNA binding proteins, it binds specifically to the 5'-end of 16S ribosomal RNA. The sequence is that of Small ribosomal subunit protein uS17 from Prochlorococcus marinus (strain MIT 9301).